The following is a 370-amino-acid chain: Calcium/calmodulin-dependent protein kinase type 1 (370 aa).

Positions 20–276 (YDFRDVLGTG…CEQALQHPWI (257 aa)) constitute a Protein kinase domain. ATP-binding positions include 26–34 (LGTGAFSEV) and K49. Residue K59 forms a Glycyl lysine isopeptide (Lys-Gly) (interchain with G-Cter in ubiquitin) linkage. D141 (proton acceptor) is an active-site residue. Residue T177 is modified to Phosphothreonine; by CaMKK1 and CaMKK2. Positions 276–316 (IAGDTALDKNIHQSVSEQIKKNFAKSKWKQAFNATAVVRHM) are autoinhibitory domain. Residues 296–317 (KNFAKSKWKQAFNATAVVRHMR) are calmodulin-binding. Positions 315-321 (HMRKLQL) match the Nuclear export signal motif. S363 carries the phosphoserine modification.

This sequence belongs to the protein kinase superfamily. CAMK Ser/Thr protein kinase family. CaMK subfamily. As to quaternary structure, monomer. Interacts with XPO1. Interacts with MARK2, ARHGEF7/BETAPIX and GIT1. Post-translationally, phosphorylated by CaMKK1 and CaMKK2 on Thr-177. In terms of processing, polybiquitinated by the E3 ubiquitin-protein ligase complex SCF(FBXL12), leading to proteasomal degradation. In terms of tissue distribution, widely expressed. Expressed in cells of the zona glomerulosa of the adrenal cortex.

It is found in the cytoplasm. The protein localises to the nucleus. The enzyme catalyses L-seryl-[protein] + ATP = O-phospho-L-seryl-[protein] + ADP + H(+). It carries out the reaction L-threonyl-[protein] + ATP = O-phospho-L-threonyl-[protein] + ADP + H(+). Its activity is regulated as follows. Activated by Ca(2+)/calmodulin. Binding of calmodulin results in conformational change that relieves intrasteric autoinhibition and allows phosphorylation of Thr-177 within the activation loop by CaMKK1 or CaMKK2. Phosphorylation of Thr-177 results in several fold increase in total activity. Unlike CaMK4, is unable to exhibit autonomous activity after Ca(2+)/calmodulin activation. In terms of biological role, calcium/calmodulin-dependent protein kinase that operates in the calcium-triggered CaMKK-CaMK1 signaling cascade and, upon calcium influx, regulates transcription activators activity, cell cycle, hormone production, cell differentiation, actin filament organization and neurite outgrowth. Recognizes the substrate consensus sequence [MVLIF]-x-R-x(2)-[ST]-x(3)-[MVLIF]. Regulates axonal extension and growth cone motility in hippocampal and cerebellar nerve cells. Upon NMDA receptor-mediated Ca(2+) elevation, promotes dendritic growth in hippocampal neurons and is essential in synapses for full long-term potentiation (LTP) and ERK2-dependent translational activation. Downstream of NMDA receptors, promotes the formation of spines and synapses in hippocampal neurons by phosphorylating ARHGEF7/BETAPIX on 'Ser-694', which results in the enhancement of ARHGEF7 activity and activation of RAC1. Promotes neuronal differentiation and neurite outgrowth by activation and phosphorylation of MARK2 on 'Ser-91', 'Ser-92', 'Ser-93' and 'Ser-294'. Promotes nuclear export of HDAC5 and binding to 14-3-3 by phosphorylation of 'Ser-259' and 'Ser-498' in the regulation of muscle cell differentiation. Regulates NUMB-mediated endocytosis by phosphorylation of NUMB on 'Ser-276' and 'Ser-295'. Involved in the regulation of basal and estrogen-stimulated migration of medulloblastoma cells through ARHGEF7/BETAPIX phosphorylation. Is required for proper activation of cyclin-D1/CDK4 complex during G1 progression in diploid fibroblasts. Plays a role in K(+) and ANG2-mediated regulation of the aldosterone synthase (CYP11B2) to produce aldosterone in the adrenal cortex. Phosphorylates EIF4G3/eIF4GII. In vitro phosphorylates CREB1, ATF1, CFTR, MYL9 and SYN1/synapsin I. In Homo sapiens (Human), this protein is Calcium/calmodulin-dependent protein kinase type 1 (CAMK1).